The chain runs to 233 residues: MFFSLAAVEVGTHLYWEIGGLEVHGQVLLITWLVLAIILTLAILGTLKLEQVPKGVQNFLESVFEYVSGIAKDQIGEYHYRPWVPFVGTLFLFIFVANWLGALIPWKLIHLPEGELAAPTNDINTTVALSLLTSISYFYAGFKEKGLGFFARYISPTPIFLPINILEDFTKPLSLSFRLFGNILADEIVVSVLCLLVPLLIPLPVMVLGIFASSVQALVFSTLSAAYIGESIE.

Helical transmembrane passes span Val-27 to Leu-47, Val-84 to Ile-104, Asp-122 to Phe-142, and Val-192 to Ala-212.

The protein belongs to the ATPase A chain family. In terms of assembly, F-type ATPases have 2 components, CF(1) - the catalytic core - and CF(0) - the membrane proton channel. CF(1) has five subunits: alpha(3), beta(3), gamma(1), delta(1), epsilon(1). CF(0) has four main subunits: a, b, b' and c.

The protein resides in the plastid. The protein localises to the chloroplast thylakoid membrane. In terms of biological role, key component of the proton channel; it plays a direct role in the translocation of protons across the membrane. The chain is ATP synthase subunit a, chloroplastic from Ochrosphaera neapolitana.